A 24-amino-acid chain; its full sequence is Attacin (24 aa).

It belongs to the attacin/sarcotoxin-2 family.

The protein localises to the secreted. Functionally, hemolymph antibacterial protein. The sequence is that of Attacin from Heliothis virescens (Tobacco budworm moth).